A 54-amino-acid polypeptide reads, in one-letter code: Large ribosomal subunit protein bL33 (54 aa).

It belongs to the bacterial ribosomal protein bL33 family.

The protein is Large ribosomal subunit protein bL33 of Xylella fastidiosa (strain M23).